A 369-amino-acid polypeptide reads, in one-letter code: uncharacterized protein (369 aa).

A signal peptide spans 1-19; it reads MKKLIAVAVLSACGSLAHA.

This is an uncharacterized protein from Haemophilus influenzae (strain ATCC 51907 / DSM 11121 / KW20 / Rd).